Reading from the N-terminus, the 89-residue chain is Small ribosomal subunit protein uS15 (89 aa).

This sequence belongs to the universal ribosomal protein uS15 family. Part of the 30S ribosomal subunit. Forms a bridge to the 50S subunit in the 70S ribosome, contacting the 23S rRNA.

One of the primary rRNA binding proteins, it binds directly to 16S rRNA where it helps nucleate assembly of the platform of the 30S subunit by binding and bridging several RNA helices of the 16S rRNA. Its function is as follows. Forms an intersubunit bridge (bridge B4) with the 23S rRNA of the 50S subunit in the ribosome. The protein is Small ribosomal subunit protein uS15 of Crocosphaera subtropica (strain ATCC 51142 / BH68) (Cyanothece sp. (strain ATCC 51142)).